Consider the following 331-residue polypeptide: Tryptophan--tRNA ligase (331 aa).

Residues Gln10–Ser12 and Gly18–Asn19 contribute to the ATP site. The 'HIGH' region motif lies at Pro11–Asn19. Asp133 provides a ligand contact to L-tryptophan. Residues Gly145 to Asp147, Val184, and Lys193 to Ser197 contribute to the ATP site. A 'KMSKS' region motif is present at residues Lys193–Ser197.

It belongs to the class-I aminoacyl-tRNA synthetase family. In terms of assembly, homodimer.

Its subcellular location is the cytoplasm. It carries out the reaction tRNA(Trp) + L-tryptophan + ATP = L-tryptophyl-tRNA(Trp) + AMP + diphosphate + H(+). Its function is as follows. Catalyzes the attachment of tryptophan to tRNA(Trp). The protein is Tryptophan--tRNA ligase of Listeria monocytogenes serotype 4b (strain F2365).